The following is a 431-amino-acid chain: MSKIVKVIGREIIDSRGNPTVEAEVHLEGGFVGLAAAPSGASTGSREALELRDGDKSRFLGKGVLKAVAAVNGPIAQAVIGKDAKDQANIDKIMIDLDGTENKSQFGANAILAVSLAAAKAAAASKGMPLYEHIAELNGTPGKFSMPLPMMNIINGGEHADNNVDIQEFMIQPVGAKTLKEAVRIGSEVFHHLAKVLKAKGLNTAVGDEGGYAPNLGSNAEALAVIAEAVKAAGYELGKDVTLAMDCAASEFYKDGKYVLAGEGNKAFTSEEFTHFLEDLTKQYPIVSIEDGLDESDWAGFKYQTEVLGDKIQLVGDDLFVTNTKILKEGIEKGVANSILIKFNQIGSLTETLAAIKMAKDAGYTAVISHRSGETEDATIADLAVGTAAGQIKTGSMSRSDRVAKYNQLIRIEEALGDRAPFNGLKEVKGQ.

Glutamine 167 provides a ligand contact to (2R)-2-phosphoglycerate. The active-site Proton donor is the glutamate 209. Positions 246, 290, and 317 each coordinate Mg(2+). The (2R)-2-phosphoglycerate site is built by lysine 342, arginine 371, serine 372, and lysine 393. Residue lysine 342 is the Proton acceptor of the active site.

The protein belongs to the enolase family. Component of the RNA degradosome, a multiprotein complex involved in RNA processing and mRNA degradation. The cofactor is Mg(2+).

The protein localises to the cytoplasm. Its subcellular location is the secreted. It localises to the cell surface. It carries out the reaction (2R)-2-phosphoglycerate = phosphoenolpyruvate + H2O. It functions in the pathway carbohydrate degradation; glycolysis; pyruvate from D-glyceraldehyde 3-phosphate: step 4/5. Catalyzes the reversible conversion of 2-phosphoglycerate (2-PG) into phosphoenolpyruvate (PEP). It is essential for the degradation of carbohydrates via glycolysis. The chain is Enolase from Yersinia pseudotuberculosis serotype O:1b (strain IP 31758).